The sequence spans 1218 residues: NACHT, LRR and PYD domains-containing protein 1a allele 5 (1218 aa).

Polar residues predominate over residues 1–29; sequence MGESQSKQESNTRVAQHGSQQDVDPTFQT. Disordered stretches follow at residues 1–44 and 71–91; these read MGES…QVEQ and EMDH…DRSE. The span at 77 to 87 shows a compositional bias: basic residues; that stretch reads RRHSHQSKKKL. Residues 175–484 enclose the NACHT domain; that stretch reads QLVIIEGAAG…EFFAAMSYIL (310 aa). Residue 181–188 participates in ATP binding; that stretch reads GAAGIGKS. LRR repeat units follow at residues 343–364, 673–693, and 730–750; these read KERN…LTLC, NLEE…RSLC, and RLAE…RQLC. Polar residues predominate over residues 799–815; it reads TMPTENTDGEESLTSSK. Residues 799-842 form a disordered region; the sequence is TMPTENTDGEESLTSSKQQQQQSGDKHMEPLGTDDDFWGPSGPV. Residues 835-968 are ZU5; the sequence is FWGPSGPVST…HFAVLENPSF (134 aa). The FIIND domain maps to 835-1118; the sequence is FWGPSGPVST…LRPALPRMAS (284 aa). Positions 969 to 1118 are UPA; that stretch reads SPMGVLLRMI…LRPALPRMAS (150 aa). In terms of domain architecture, CARD spans 1122–1211; sequence DAPALLHFVD…HLIMDLLEKS (90 aa).

It belongs to the NLRP family. As to quaternary structure, interacts (via LRR repeats) with BCL2 and BCL2L1 (via the loop between motifs BH4 and BH3). Interacts with NOD2; this interaction is enhanced in the presence of muramyl dipeptide (MDP) and increases IL1B release. Interacts with EIF2AK2/PKR; this interaction requires EIF2AK2 activity, is accompanied by EIF2AK2 autophosphorylation and promotes inflammasome assembly in response to danger-associated signals. Interacts with MEFV; this interaction targets Nlrp1a to degradation by autophagy, hence preventing excessive IL1B- and IL18-mediated inflammation. Interacts with DPP9; leading to inhibit activation of the inflammasome. DPP9 acts via formation of a ternary complex, composed of a DPP9 homodimer, one full-length NLRP1 protein, and one cleaved C-terminus of Nlrp1a (NACHT, LRR and PYD domains-containing protein 1a, C-terminus). Interacts with DPP8; leading to inhibit activation of the inflammasome, probably via formation of a ternary complex with DPP8. Interacts with the C-terminal part of Nlrp1a (NACHT, LRR and PYD domains-containing protein 1a, C-terminus) in absence of pathogens and other damage-associated signals. In terms of assembly, interacts with the N-terminal part of Nlrp1a (NACHT, LRR and PYD domains-containing protein 1a, N-terminus) in absence of pathogens and other damage-associated signals. Homomultimer; forms the Nlrp1a inflammasome polymeric complex, a filament composed of homopolymers of this form in response to pathogens and other damage-associated signals. The Nlrp1a inflammasome polymeric complex directly recruits pro-caspase-1 (proCASP1) independently of PYCARD/ASC. Interacts (via CARD domain) with CASP1 (via CARD domain); leading to CASP1 activation. Autocatalytically cleaved. Autocatalytic cleavage in FIIND region occurs constitutively, prior to activation signals, and is required for inflammasome activity (IL1B release), possibly by facilitating CASP1 binding. Both N- and C-terminal parts remain associated non-covalently. In terms of processing, ubiquitinated in response to pathogen-associated signals, leading to its degradation by the proteasome and subsequent release of the cleaved C-terminal part of the protein (NACHT, LRR and PYD domains-containing protein 1a, C-terminus), which polymerizes and forms the Nlrp1a inflammasome.

The protein localises to the cytoplasm. It is found in the cytosol. Its subcellular location is the nucleus. The protein resides in the inflammasome. Its activity is regulated as follows. Activated by pathogens and other damage-associated signals: activation promotes ubiquitination and degradation of the N-terminal part, releasing the cleaved C-terminal part of the protein (NACHT, LRR and PYD domains-containing protein 1a, C-terminus), which polymerizes and forms the Nlrp1a inflammasome. Nlrp1a inflammasome is inhibited by DPP8 and DPP9, which sequester the C-terminal fragment of Nlrp1a (NACHT, LRR and PYD domains-containing protein 1a, C-terminus) in a ternary complex, thereby preventing Nlrp1a oligomerization and activation. Nlrp1a inflammasome is strongly activated by Val-boroPro (Talabostat, PT-100), an inhibitor of dipeptidyl peptidases DPP8 and DPP9. Val-boroPro relieves inhibition of DPP8 and/or DPP9 by promoting disruption of the ternary complex, releasing its C-terminal part from autoinhibition. Not activated by cleavage by B.anthracis lethal toxin (LT) endopeptidase. Highly activated by Toxoplasma gondii. Its function is as follows. Acts as the sensor component of the Nlrp1a inflammasome, which mediates inflammasome activation in response to various pathogen-associated signals, leading to subsequent pyroptosis. Inflammasomes are supramolecular complexes that assemble in the cytosol in response to pathogens and other damage-associated signals and play critical roles in innate immunity and inflammation. Acts as a recognition receptor (PRR): recognizes specific pathogens and other damage-associated signals, such as Val-boroPro inhibitor, and mediates the formation of the inflammasome polymeric complex. In response to pathogen-associated signals, the N-terminal part of Nlrp1a is degraded by the proteasome, releasing the cleaved C-terminal part of the protein (NACHT, LRR and PYD domains-containing protein 1a, C-terminus), which polymerizes to initiate the formation of the inflammasome complex: the inflammasome directly recruits pro-caspase-1 (proCASP1) independently of PYCARD/ASC and promotes caspase-1 (CASP1) activation, which subsequently cleaves and activates inflammatory cytokines IL1B and IL18 and gasdermin-D (GSDMD), leading to pyroptosis. In the absence of GSDMD expression, the Nlrp1a inflammasome is able to recruit and activate CASP8, leading to activation of gasdermin-E (GSDME). In terms of biological role, constitutes the precursor of the Nlrp1a inflammasome, which mediates autoproteolytic processing within the FIIND domain to generate the N-terminal and C-terminal parts, which are associated non-covalently in absence of pathogens and other damage-associated signals. Regulatory part that prevents formation of the Nlrp1a inflammasome: in absence of pathogens and other damage-associated signals, interacts with the C-terminal part of Nlrp1a (NACHT, LRR and PYD domains-containing protein 1a, C-terminus), preventing activation of the Nlrp1a inflammasome. In response to pathogen-associated signals, this part is ubiquitinated by the N-end rule pathway and degraded by the proteasome, releasing the cleaved C-terminal part of the protein, which polymerizes and forms the Nlrp1a inflammasome. Functionally, constitutes the active part of the Nlrp1a inflammasome. In absence of pathogens and other damage-associated signals, interacts with the N-terminal part of Nlrp1a (NACHT, LRR and PYD domains-containing protein 1a, N-terminus), preventing activation of the Nlrp1a inflammasome. In response to pathogen-associated signals, the N-terminal part of Nlrp1a is degraded by the proteasome, releasing this form, which polymerizes to form the Nlrp1a inflammasome complex: the Nlrp1a inflammasome complex then directly recruits pro-caspase-1 (proCASP1) and promotes caspase-1 (CASP1) activation, leading to gasdermin-D (GSDMD) cleavage and subsequent pyroptosis. The chain is NACHT, LRR and PYD domains-containing protein 1a allele 5 from Rattus norvegicus (Rat).